Consider the following 339-residue polypeptide: Phosphate acyltransferase (339 aa).

The protein belongs to the PlsX family. In terms of assembly, homodimer. Probably interacts with PlsY.

The protein localises to the cytoplasm. The catalysed reaction is a fatty acyl-[ACP] + phosphate = an acyl phosphate + holo-[ACP]. Its pathway is lipid metabolism; phospholipid metabolism. Functionally, catalyzes the reversible formation of acyl-phosphate (acyl-PO(4)) from acyl-[acyl-carrier-protein] (acyl-ACP). This enzyme utilizes acyl-ACP as fatty acyl donor, but not acyl-CoA. This Methylococcus capsulatus (strain ATCC 33009 / NCIMB 11132 / Bath) protein is Phosphate acyltransferase.